Consider the following 1220-residue polypeptide: DNA-directed RNA polymerase subunit beta (1220 aa).

It belongs to the RNA polymerase beta chain family. The RNAP catalytic core consists of 2 alpha, 1 beta, 1 beta' and 1 omega subunit. When a sigma factor is associated with the core the holoenzyme is formed, which can initiate transcription.

It carries out the reaction RNA(n) + a ribonucleoside 5'-triphosphate = RNA(n+1) + diphosphate. In terms of biological role, DNA-dependent RNA polymerase catalyzes the transcription of DNA into RNA using the four ribonucleoside triphosphates as substrates. This is DNA-directed RNA polymerase subunit beta from Mesomycoplasma hyopneumoniae (strain 232) (Mycoplasma hyopneumoniae).